Here is a 449-residue protein sequence, read N- to C-terminus: Glucose-6-phosphate isomerase (449 aa).

Catalysis depends on Glu-291, which acts as the Proton donor. Catalysis depends on residues His-312 and Lys-426.

The protein belongs to the GPI family.

The protein resides in the cytoplasm. The enzyme catalyses alpha-D-glucose 6-phosphate = beta-D-fructose 6-phosphate. The protein operates within carbohydrate biosynthesis; gluconeogenesis. It functions in the pathway carbohydrate degradation; glycolysis; D-glyceraldehyde 3-phosphate and glycerone phosphate from D-glucose: step 2/4. Catalyzes the reversible isomerization of glucose-6-phosphate to fructose-6-phosphate. This Streptococcus pyogenes serotype M2 (strain MGAS10270) protein is Glucose-6-phosphate isomerase.